Reading from the N-terminus, the 111-residue chain is Dynein light chain Tctex-type (111 aa).

Belongs to the dynein light chain Tctex-type family.

The protein resides in the cytoplasm. Its subcellular location is the cytoskeleton. Acts as a non-catalytic accessory component of a dynein complex. The protein is Dynein light chain Tctex-type (dlc1) of Schizosaccharomyces pombe (strain 972 / ATCC 24843) (Fission yeast).